The following is a 371-amino-acid chain: Cytochrome b (371 aa).

4 consecutive transmembrane segments (helical) span residues 25–45 (FGSMLLTCLALQVLTGFFLAI), 69–90 (WMMQNLHAIGASMFFICIYIHI), 105–125 (WMSGITLLITLMATAFFGYVL), and 170–190 (FFALHFILPFAIISLSSLHII). Positions 75 and 89 each coordinate heme b. Heme b-binding residues include His174 and His188. His193 serves as a coordination point for a ubiquinone. A run of 4 helical transmembrane segments spans residues 218-238 (HKDLLLLTFMILLLFTIVSFL), 280-300 (LGGALALVMSIMILFIIPFTH), 312-332 (LSQLMFWTLVSTFATITWAAT), and 339-358 (FIIISQTTSMLYFTFFLSTP).

The protein belongs to the cytochrome b family. The cytochrome bc1 complex contains 3 respiratory subunits (MT-CYB, CYC1 and UQCRFS1), 2 core proteins (UQCRC1 and UQCRC2) and probably 6 low-molecular weight proteins. It depends on heme b as a cofactor.

It localises to the mitochondrion inner membrane. Component of the ubiquinol-cytochrome c reductase complex (complex III or cytochrome b-c1 complex) that is part of the mitochondrial respiratory chain. The b-c1 complex mediates electron transfer from ubiquinol to cytochrome c. Contributes to the generation of a proton gradient across the mitochondrial membrane that is then used for ATP synthesis. The chain is Cytochrome b (MT-CYB) from Antaresia maculosa (Eastern small blotched python).